Here is a 349-residue protein sequence, read N- to C-terminus: 4-hydroxy-2-oxovalerate aldolase 1 (349 aa).

The Pyruvate carboxyltransferase domain occupies 9–261; sequence ITVHDMTLRD…ATGVDVFRIQ (253 aa). Substrate is bound at residue 17-18; the sequence is RD. Residue aspartate 18 participates in Mn(2+) binding. Residue histidine 21 is the Proton acceptor of the active site. Residues serine 171 and histidine 200 each coordinate substrate. Mn(2+) contacts are provided by histidine 200 and histidine 202. Residue tyrosine 291 participates in substrate binding.

The protein belongs to the 4-hydroxy-2-oxovalerate aldolase family.

It carries out the reaction (S)-4-hydroxy-2-oxopentanoate = acetaldehyde + pyruvate. The sequence is that of 4-hydroxy-2-oxovalerate aldolase 1 from Methylibium petroleiphilum (strain ATCC BAA-1232 / LMG 22953 / PM1).